We begin with the raw amino-acid sequence, 178 residues long: CASP-like protein 5A1 (178 aa).

Residues 1-24 form a disordered region; it reads MFASRPAVHPVEAPPPTDPVEQPT. The Cytoplasmic segment spans residues 1-37; sequence MFASRPAVHPVEAPPPTDPVEQPTGVLMKDLPGMPGT. A helical membrane pass occupies residues 38–58; sequence AGGLGLRVAQFVFAGVALAVM. Over 59 to 69 the chain is Extracellular; that stretch reads ASTSDFPSVTA. The helical transmembrane segment at 70 to 90 threads the bilayer; that stretch reads FCYLVAATIMQCLWSFSLAIV. Residues 91-105 are Cytoplasmic-facing; the sequence is DIYALLVKRCLRNRR. The helical transmembrane segment at 106-126 threads the bilayer; it reads AVCLFAIGDGITAALTFGAAC. Topologically, residues 127-152 are extracellular; sequence SSAGITVLIDNDLNICAENHCGSFKT. A helical transmembrane segment spans residues 153 to 173; it reads ATALAFMSWFALTPSFLLNFW. At 174–178 the chain is on the cytoplasmic side; sequence SMAAR.

It belongs to the Casparian strip membrane proteins (CASP) family. In terms of assembly, homodimer and heterodimers.

It is found in the cell membrane. The chain is CASP-like protein 5A1 from Brachypodium distachyon (Purple false brome).